The following is a 236-amino-acid chain: LexA repressor (236 aa).

Residues 26–46 constitute a DNA-binding region (H-T-H motif); sequence FDEMKEALDLRSKSGIHRLIT. Residues serine 157 and lysine 195 each act as for autocatalytic cleavage activity in the active site.

Belongs to the peptidase S24 family. Homodimer.

It catalyses the reaction Hydrolysis of Ala-|-Gly bond in repressor LexA.. In terms of biological role, represses a number of genes involved in the response to DNA damage (SOS response), including recA and lexA. In the presence of single-stranded DNA, RecA interacts with LexA causing an autocatalytic cleavage which disrupts the DNA-binding part of LexA, leading to derepression of the SOS regulon and eventually DNA repair. The protein is LexA repressor of Azorhizobium caulinodans (strain ATCC 43989 / DSM 5975 / JCM 20966 / LMG 6465 / NBRC 14845 / NCIMB 13405 / ORS 571).